The primary structure comprises 315 residues: DNA-directed RNA polymerase subunit alpha (315 aa).

Residues 1–228 (MIEMEKPKVE…EHLNLFITLK (228 aa)) form an alpha N-terminal domain (alpha-NTD) region. Residues 245-315 (KEKVLEMTIE…LGLGLRPSDE (71 aa)) form an alpha C-terminal domain (alpha-CTD) region.

The protein belongs to the RNA polymerase alpha chain family. In terms of assembly, homodimer. The RNAP catalytic core consists of 2 alpha, 1 beta, 1 beta' and 1 omega subunit. When a sigma factor is associated with the core the holoenzyme is formed, which can initiate transcription.

The catalysed reaction is RNA(n) + a ribonucleoside 5'-triphosphate = RNA(n+1) + diphosphate. In terms of biological role, DNA-dependent RNA polymerase catalyzes the transcription of DNA into RNA using the four ribonucleoside triphosphates as substrates. The protein is DNA-directed RNA polymerase subunit alpha of Alkaliphilus metalliredigens (strain QYMF).